Reading from the N-terminus, the 70-residue chain is Large ribosomal subunit protein bL31 (70 aa).

Zn(2+) is bound by residues C16, C18, C38, and C41.

Belongs to the bacterial ribosomal protein bL31 family. Type A subfamily. As to quaternary structure, part of the 50S ribosomal subunit. Zn(2+) is required as a cofactor.

Functionally, binds the 23S rRNA. This chain is Large ribosomal subunit protein bL31, found in Saccharopolyspora erythraea (strain ATCC 11635 / DSM 40517 / JCM 4748 / NBRC 13426 / NCIMB 8594 / NRRL 2338).